Here is a 211-residue protein sequence, read N- to C-terminus: Prolactin-3C1 (211 aa).

The signal sequence occupies residues 1-29 (MQLSLTQARTWKGLLLLVSCMILWISVTP). Asparagine 77 and asparagine 173 each carry an N-linked (GlcNAc...) asparagine glycan. Cysteine 80 and cysteine 187 are oxidised to a cystine.

It belongs to the somatotropin/prolactin family. In terms of tissue distribution, expressed exclusively in decidual tissue.

The protein resides in the secreted. In Rattus norvegicus (Rat), this protein is Prolactin-3C1 (Prl3c1).